Here is a 263-residue protein sequence, read N- to C-terminus: Probable WRKY transcription factor 62 (263 aa).

Residues Asp59 to Ser104 form a disordered region. A compositionally biased stretch (low complexity) spans Gln64–Ser74. Positions Ser104–Ala174 form a DNA-binding region, WRKY.

This sequence belongs to the WRKY group III family.

It is found in the nucleus. Functionally, transcription factor. Interacts specifically with the W box (5'-(T)TGAC[CT]-3'), a frequently occurring elicitor-responsive cis-acting element. The chain is Probable WRKY transcription factor 62 (WRKY62) from Arabidopsis thaliana (Mouse-ear cress).